We begin with the raw amino-acid sequence, 1062 residues long: Carbamoyl phosphate synthase large chain (1062 aa).

The carboxyphosphate synthetic domain stretch occupies residues 1–401 (MPKRTDIHKI…AMQKAVQSLE (401 aa)). ATP contacts are provided by Arg129, Arg169, Gly175, Gly176, Lys208, Ile210, Glu215, Gly241, Ile242, His243, Gln284, and Glu298. The ATP-grasp 1 domain occupies 133–327 (KELCQKLGEP…IAKMAAKIAI (195 aa)). Positions 284, 298, and 300 each coordinate Mg(2+). Residues Gln284, Glu298, and Asn300 each coordinate Mn(2+). Residues 402 to 546 (IDEKDLYSAK…YSTYDGENES (145 aa)) form an oligomerization domain region. A carbamoyl phosphate synthetic domain region spans residues 547 to 929 (RKSGKKSVIV…ALYKAFAGAK (383 aa)). The ATP-grasp 2 domain maps to 671–861 (DQIIKSLHLH…MAQVATRVIM (191 aa)). Arg707, Asp746, Leu748, Glu752, Gly777, Val778, His779, Ser780, Gln820, and Glu832 together coordinate ATP. Mg(2+)-binding residues include Gln820, Glu832, and Asn834. Mn(2+) contacts are provided by Gln820, Glu832, and Asn834. Residues 930-1062 (MQLPENGNVL…NRSFATDALK (133 aa)) enclose the MGS-like domain. The segment at 930–1062 (MQLPENGNVL…NRSFATDALK (133 aa)) is allosteric domain.

It belongs to the CarB family. In terms of assembly, composed of two chains; the small (or glutamine) chain promotes the hydrolysis of glutamine to ammonia, which is used by the large (or ammonia) chain to synthesize carbamoyl phosphate. Tetramer of heterodimers (alpha,beta)4. Requires Mg(2+) as cofactor. Mn(2+) serves as cofactor.

It catalyses the reaction hydrogencarbonate + L-glutamine + 2 ATP + H2O = carbamoyl phosphate + L-glutamate + 2 ADP + phosphate + 2 H(+). The enzyme catalyses hydrogencarbonate + NH4(+) + 2 ATP = carbamoyl phosphate + 2 ADP + phosphate + 2 H(+). It functions in the pathway amino-acid biosynthesis; L-arginine biosynthesis; carbamoyl phosphate from bicarbonate: step 1/1. The protein operates within pyrimidine metabolism; UMP biosynthesis via de novo pathway; (S)-dihydroorotate from bicarbonate: step 1/3. Its function is as follows. Large subunit of the glutamine-dependent carbamoyl phosphate synthetase (CPSase). CPSase catalyzes the formation of carbamoyl phosphate from the ammonia moiety of glutamine, carbonate, and phosphate donated by ATP, constituting the first step of 2 biosynthetic pathways, one leading to arginine and/or urea and the other to pyrimidine nucleotides. The large subunit (synthetase) binds the substrates ammonia (free or transferred from glutamine from the small subunit), hydrogencarbonate and ATP and carries out an ATP-coupled ligase reaction, activating hydrogencarbonate by forming carboxy phosphate which reacts with ammonia to form carbamoyl phosphate. The protein is Carbamoyl phosphate synthase large chain of Lactobacillus delbrueckii subsp. bulgaricus (strain ATCC BAA-365 / Lb-18).